Reading from the N-terminus, the 340-residue chain is tRNA dimethylallyltransferase (340 aa).

The tract at residues 1–25 is disordered; that stretch reads MDQNRSPNGRDCREPPSPSSTARPG. 31–38 provides a ligand contact to ATP; sequence GPTATGKS. 33 to 38 serves as a coordination point for substrate; it reads TATGKS. The tract at residues 56 to 59 is interaction with substrate tRNA; it reads DSRQ.

Belongs to the IPP transferase family. As to quaternary structure, monomer. Mg(2+) serves as cofactor.

It carries out the reaction adenosine(37) in tRNA + dimethylallyl diphosphate = N(6)-dimethylallyladenosine(37) in tRNA + diphosphate. Its function is as follows. Catalyzes the transfer of a dimethylallyl group onto the adenine at position 37 in tRNAs that read codons beginning with uridine, leading to the formation of N6-(dimethylallyl)adenosine (i(6)A). This is tRNA dimethylallyltransferase from Synechococcus sp. (strain JA-3-3Ab) (Cyanobacteria bacterium Yellowstone A-Prime).